Here is an 800-residue protein sequence, read N- to C-terminus: Phosphate transporter PHO1 homolog 9 (800 aa).

Residues 1–346 enclose the SPX domain; it reads MKFGREFETQ…SRNASKPYLN (346 aa). Residues 1–398 lie on the Cytoplasmic side of the membrane; the sequence is MKFGREFETQ…KTKREKHRIT (398 aa). Disordered stretches follow at residues 38–77, 91–119, and 212–234; these read QKQQ…PGLS, NRAS…HNHH, and PDLN…PAPS. Positions 42–51 are enriched in pro residues; it reads RPPPPPPPPS. Over residues 63–75 the composition is skewed to gly residues; it reads GEGGGGGGGGGPG. A compositionally biased stretch (basic residues) spans 95-119; it reads RSPKKSHKHHNPLSSKRHHHHHNHH. Polar residues predominate over residues 216–229; it reads SVASAPSSPHSTMR. The helical transmembrane segment at 399 to 419 threads the bilayer; the sequence is YFLGFFSGCAVALAIAITVLV. At 420–439 the chain is on the extracellular side; it reads HIRGLTKSEGRHQYMENIFP. Residues 440–460 traverse the membrane as a helical segment; the sequence is LYSLFGFVAVHLFMYAADIYF. Residues 461-483 lie on the Cytoplasmic side of the membrane; the sequence is WSRYRVNYPFIFGFEQGNDLGYR. The chain crosses the membrane as a helical span at residues 484-504; that stretch reads EVLLVGSGLAVLTFGGVISNL. At 505 to 520 the chain is on the extracellular side; sequence DMEMDPRTKSFSVITE. The chain crosses the membrane as a helical span at residues 521-541; it reads LVPLALLVCLMMVLFCPFNII. The Cytoplasmic segment spans residues 542-670; that stretch reads YRSSRYFFVG…IFEMKRGTYW (129 aa). The EXS domain maps to 606–800; that stretch reads YDSEIYKELY…FQELGGSKSV (195 aa). Residues 671–691 form a helical membrane-spanning segment; sequence LTVAVTTSSIATLFNTYWDIF. Residues 692–718 are Extracellular-facing; sequence RDWGLMNRNSKNPWLRDKLLVPYKSIY. A helical transmembrane segment spans residues 719–739; that stretch reads FIVMVANVVLRLAWMQTVLGI. Residues 740–800 lie on the Cytoplasmic side of the membrane; the sequence is KEAPFLHKRA…FQELGGSKSV (61 aa).

It belongs to the SYG1 (TC 2.A.94) family. As to expression, specifically expressed in pollen grains.

Its subcellular location is the cell membrane. In terms of biological role, may transport inorganic phosphate (Pi). The sequence is that of Phosphate transporter PHO1 homolog 9 (PHO1-H9) from Arabidopsis thaliana (Mouse-ear cress).